Consider the following 156-residue polypeptide: Small ribosomal subunit protein uS7 (156 aa).

The protein belongs to the universal ribosomal protein uS7 family. Part of the 30S ribosomal subunit. Contacts proteins S9 and S11.

Its function is as follows. One of the primary rRNA binding proteins, it binds directly to 16S rRNA where it nucleates assembly of the head domain of the 30S subunit. Is located at the subunit interface close to the decoding center, probably blocks exit of the E-site tRNA. The sequence is that of Small ribosomal subunit protein uS7 from Thermobifida fusca (strain YX).